Reading from the N-terminus, the 144-residue chain is Large ribosomal subunit protein uL24 (144 aa).

The segment at 102-144 (NIVVEKPEPEPEPRKEETAEAQEAKEEAVAEEKTEVDDNDKQN) is disordered. Positions 103 to 134 (IVVEKPEPEPEPRKEETAEAQEAKEEAVAEEK) are enriched in basic and acidic residues. The span at 135-144 (TEVDDNDKQN) shows a compositional bias: acidic residues.

Belongs to the universal ribosomal protein uL24 family. Part of the 50S ribosomal subunit.

Its function is as follows. One of two assembly initiator proteins, it binds directly to the 5'-end of the 23S rRNA, where it nucleates assembly of the 50S subunit. Located at the polypeptide exit tunnel on the outside of the subunit. The chain is Large ribosomal subunit protein uL24 (rpl24) from Thermoplasma acidophilum (strain ATCC 25905 / DSM 1728 / JCM 9062 / NBRC 15155 / AMRC-C165).